Here is a 509-residue protein sequence, read N- to C-terminus: Maturase K (509 aa).

Belongs to the intron maturase 2 family. MatK subfamily.

The protein localises to the plastid. Its function is as follows. Usually encoded in the trnK tRNA gene intron. Probably assists in splicing its own and other chloroplast group II introns. The sequence is that of Maturase K from Cuscuta reflexa (Southern Asian dodder).